A 90-amino-acid chain; its full sequence is DNA-binding protein HU-alpha (90 aa).

Belongs to the bacterial histone-like protein family. Heterodimer of an alpha and a beta chain.

Its function is as follows. Histone-like DNA-binding protein which is capable of wrapping DNA to stabilize it, and thus to prevent its denaturation under extreme environmental conditions. The sequence is that of DNA-binding protein HU-alpha (hupA) from Vibrio cholerae serotype O1 (strain ATCC 39315 / El Tor Inaba N16961).